We begin with the raw amino-acid sequence, 923 residues long: Alanine--tRNA ligase (923 aa).

Residues His614, His618, Cys717, and His721 each contribute to the Zn(2+) site. The interval 884–903 (KVGGGGGGPPDFAQGGGPDA) is disordered. Residues 885-901 (VGGGGGGPPDFAQGGGP) show a composition bias toward gly residues.

Belongs to the class-II aminoacyl-tRNA synthetase family. The cofactor is Zn(2+).

It is found in the cytoplasm. It carries out the reaction tRNA(Ala) + L-alanine + ATP = L-alanyl-tRNA(Ala) + AMP + diphosphate. Catalyzes the attachment of alanine to tRNA(Ala) in a two-step reaction: alanine is first activated by ATP to form Ala-AMP and then transferred to the acceptor end of tRNA(Ala). Also edits incorrectly charged Ser-tRNA(Ala) and Gly-tRNA(Ala) via its editing domain. The chain is Alanine--tRNA ligase from Haloquadratum walsbyi (strain DSM 16790 / HBSQ001).